A 294-amino-acid chain; its full sequence is tRNA pseudouridine synthase B (294 aa).

Asp39 acts as the Nucleophile in catalysis.

This sequence belongs to the pseudouridine synthase TruB family. Type 1 subfamily.

It catalyses the reaction uridine(55) in tRNA = pseudouridine(55) in tRNA. In terms of biological role, responsible for synthesis of pseudouridine from uracil-55 in the psi GC loop of transfer RNAs. The sequence is that of tRNA pseudouridine synthase B from Streptococcus pyogenes serotype M28 (strain MGAS6180).